Here is a 299-residue protein sequence, read N- to C-terminus: Nucleotide-binding protein SCO1952 (299 aa).

Residue Gly23–Ser30 coordinates ATP. Asp74–Gly77 serves as a coordination point for GTP.

It belongs to the RapZ-like family.

Its function is as follows. Displays ATPase and GTPase activities. This chain is Nucleotide-binding protein SCO1952, found in Streptomyces coelicolor (strain ATCC BAA-471 / A3(2) / M145).